The sequence spans 115 residues: U3-lycotoxin-Ls1a (115 aa).

The signal sequence occupies residues 1-20 (MKFVLLFGVLLVTLFSYSSA). The propeptide occupies 21–44 (EMLDDFDQADEDELLSLIEKEEAR). 4 disulfides stabilise this stretch: Cys48-Cys63, Cys55-Cys72, Cys62-Cys87, and Cys74-Cys85.

The protein belongs to the neurotoxin 19 (CSTX) family. 01 subfamily. In terms of tissue distribution, expressed by the venom gland.

The protein resides in the secreted. The polypeptide is U3-lycotoxin-Ls1a (Lycosa singoriensis (Wolf spider)).